The primary structure comprises 113 residues: Ig heavy chain V-III region U61 (113 aa).

In terms of domain architecture, Ig-like spans 1–113 (EVKLEESGGG…YWGQGTLVPV (113 aa)). The cysteines at positions 22 and 98 are disulfide-linked.

This chain is Ig heavy chain V-III region U61, found in Mus musculus (Mouse).